The following is a 492-amino-acid chain: Putative BTB/POZ domain and WD-repeat protein R786 (492 aa).

Residues 16 to 86 form the BTB domain; the sequence is TDVEIVLIDE…FYGQIVDSTN (71 aa). WD repeat units follow at residues 241-281 and 286-325; these read QSSC…IKIK and LINR…SKGI.

This sequence belongs to the mimivirus BTB/WD family.

This chain is Putative BTB/POZ domain and WD-repeat protein R786, found in Acanthamoeba polyphaga (Amoeba).